We begin with the raw amino-acid sequence, 225 residues long: Uracil-DNA glycosylase (225 aa).

Catalysis depends on Asp-65, which acts as the Proton acceptor.

The protein belongs to the uracil-DNA glycosylase (UDG) superfamily. UNG family.

The protein localises to the cytoplasm. The catalysed reaction is Hydrolyzes single-stranded DNA or mismatched double-stranded DNA and polynucleotides, releasing free uracil.. Excises uracil residues from the DNA which can arise as a result of misincorporation of dUMP residues by DNA polymerase or due to deamination of cytosine. This chain is Uracil-DNA glycosylase, found in Bacillus cereus (strain AH187).